The sequence spans 638 residues: Acetolactate synthase 1, chloroplastic (638 aa).

Over residues 1–19 the composition is skewed to low complexity; it reads MATAAAASTALTGATTAAP. Residues 1-23 are disordered; it reads MATAAAASTALTGATTAAPKARR. The N-terminal 39 residues, 1 to 39, are a transit peptide targeting the chloroplast; sequence MATAAAASTALTGATTAAPKARRRAHLLATRRALAAPIR. Glu112 provides a ligand contact to thiamine diphosphate. A disulfide bridge connects residues Cys132 and Cys278. Residues Arg214, 320–341, and 363–382 each bind FAD; these read HGTVYANYAVDKADLLLALGVR and DIDPAEIGKNKQPHVSICAD. The interval 455-535 is thiamine pyrophosphate binding; it reads QHQMWAAQYY…VKVFVLNNQH (81 aa). 2 residues coordinate Mg(2+): Asp506 and Asn533.

This sequence belongs to the TPP enzyme family. It depends on Mg(2+) as a cofactor. Requires thiamine diphosphate as cofactor.

It is found in the plastid. Its subcellular location is the chloroplast. It catalyses the reaction 2 pyruvate + H(+) = (2S)-2-acetolactate + CO2. Its pathway is amino-acid biosynthesis; L-isoleucine biosynthesis; L-isoleucine from 2-oxobutanoate: step 1/4. It participates in amino-acid biosynthesis; L-valine biosynthesis; L-valine from pyruvate: step 1/4. This chain is Acetolactate synthase 1, chloroplastic (ALS1), found in Zea mays (Maize).